Consider the following 249-residue polypeptide: 5'-nucleotidase SurE (249 aa).

The a divalent metal cation site is built by D8, D9, S39, and N91.

Belongs to the SurE nucleotidase family. A divalent metal cation is required as a cofactor.

It localises to the cytoplasm. It catalyses the reaction a ribonucleoside 5'-phosphate + H2O = a ribonucleoside + phosphate. In terms of biological role, nucleotidase that shows phosphatase activity on nucleoside 5'-monophosphates. This chain is 5'-nucleotidase SurE, found in Pseudomonas fluorescens (strain SBW25).